Here is a 348-residue protein sequence, read N- to C-terminus: MSETPIWPPRWPRAHGGPLAAGDFRATPEDFVVEEVFDFAPEGQGEHLWLWIEKRDLTTPEAAKRVARACGVRPRDVGYSGLKDRVAVTRQWLSVHLPGREAPAELTATLATSGIAILDARRHPRKLKRGVHRLNRFTLRLTGDIAEHPGLSRQWQTLCEAGVPNYFGPQRFGREGRNLIMARSAFARGWRKRDDPHGMQLSAARSFLFNEVLAARLRTDCWRTPRDGDVLALAGSASRFVTETVDATLLDRARRGDVAPTGPLWGKGRQESGAEVAALEADIMATHAALSQGLEAAGARMDRRPLCLRLETPALRLDEEGGVVVSFGLPRGAFATAVLRELMQHPVL.

The active-site Nucleophile is D84. A TRUD domain is found at 162–308; sequence GVPNYFGPQR…ARMDRRPLCL (147 aa).

The protein belongs to the pseudouridine synthase TruD family.

The enzyme catalyses uridine(13) in tRNA = pseudouridine(13) in tRNA. In terms of biological role, responsible for synthesis of pseudouridine from uracil-13 in transfer RNAs. The protein is tRNA pseudouridine synthase D of Chromohalobacter salexigens (strain ATCC BAA-138 / DSM 3043 / CIP 106854 / NCIMB 13768 / 1H11).